Consider the following 347-residue polypeptide: Outer membrane protein A (347 aa).

Positions 1-21 (MKKQALTIIFLLVSLVTGIQA) are cleaved as a signal peptide. A run of 8 beta stranded transmembrane segments spans residues 26 to 36 (HWYLGTKMGWS), 63 to 74 (APVFGLFLGYEF), 78 to 86 (FSFEIENDT), 105 to 116 (NSLQLATKLSYP), 121 to 129 (FHIYTQLGG), 154 to 163 (PNVSLGAEYI), 168 to 175 (FITRLDYT), and 194 to 202 (DVALSFGWK). The segment at 207–218 (NINEIFSSYIPQ) is hinge-like. The OmpA-like domain occupies 220 to 347 (SDKQYVALNE…RRVEIEVLSD (128 aa)). A disulfide bridge links cysteine 321 with cysteine 333.

Belongs to the outer membrane OOP (TC 1.B.6) superfamily. OmpA family. As to quaternary structure, monomer and homodimer.

Its subcellular location is the cell outer membrane. With TolR probably plays a role in maintaining the position of the peptidoglycan cell wall in the periplasm. Acts as a porin with low permeability that allows slow penetration of small solutes; an internal gate slows down solute passage. The chain is Outer membrane protein A from Buchnera aphidicola subsp. Schizaphis graminum (strain Sg).